The following is a 499-amino-acid chain: Serine carboxypeptidase 1 (499 aa).

The first 30 residues, methionine 1–alanine 30, serve as a signal peptide directing secretion. 3 disulfides stabilise this stretch: cysteine 92–cysteine 388, cysteine 256–cysteine 268, and cysteine 291–cysteine 355. Asparagine 148 carries N-linked (GlcNAc...) asparagine glycosylation. Serine 188 is a catalytic residue. An N-linked (GlcNAc...) asparagine glycan is attached at asparagine 262. A propeptide spans isoleucine 297–serine 351 (linker peptide). Asparagine 407 carries an N-linked (GlcNAc...) asparagine glycan. Catalysis depends on residues aspartate 423 and histidine 476. The short motif at serine 497–leucine 499 is the Microbody targeting signal element.

Belongs to the peptidase S10 family. As to quaternary structure, carboxypeptidase I is a dimer, where each monomer is composed of two chains linked by disulfide bonds. The linker peptide is endoproteolytically excised during enzyme maturation.

It is found in the secreted. It carries out the reaction Release of a C-terminal amino acid with broad specificity.. Its function is as follows. May be involved in the degradation of small peptides (2-5 residues) or in the degradation of storage proteins in the embryo. The protein is Serine carboxypeptidase 1 (CBP1) of Hordeum vulgare (Barley).